Consider the following 141-residue polypeptide: Small ribosomal subunit protein bS6 (141 aa).

The segment at Thr97–Glu141 is disordered. Positions Leu103 to Ser124 are enriched in basic and acidic residues. Residues Ala125–Glu141 show a composition bias toward acidic residues.

Belongs to the bacterial ribosomal protein bS6 family.

Its function is as follows. Binds together with bS18 to 16S ribosomal RNA. The sequence is that of Small ribosomal subunit protein bS6 from Pseudomonas fluorescens (strain ATCC BAA-477 / NRRL B-23932 / Pf-5).